Consider the following 235-residue polypeptide: MPSKRKRNPLQYQTSGSLDEETNQRSAFPQIDNNSASESLEYDIPLDGLDYLATVREEARKLVPFVAARREPETRETIPLRKLEIEAGKKSFDPFLRYLLNIIDKEGERLEQYMESSSLDASILPKNLQQWRVYIEHKAPCWAILAVVDLATVLEILESLSSWLEKDAIDLQSQWIFCFCYKLPELLNGEDISTLRSVLKSLRSTHTSFPALQMSASALQAVLVYRYGQKDLFQT.

The disordered stretch occupies residues 1–34 (MPSKRKRNPLQYQTSGSLDEETNQRSAFPQIDNN). The segment covering 24–34 (QRSAFPQIDNN) has biased composition (polar residues). 2 positions are modified to phosphoserine: S117 and S118.

This sequence belongs to the gemin-2 family. In terms of assembly, part of the core SMN complex at least composed of smn1, yip11/gem2, gem6, gem7 and gem8. Interacts with smn1; the interaction is direct.

The protein localises to the nucleus. Its function is as follows. The SMN complex catalyzes the assembly of small nuclear ribonucleoproteins (snRNPs), the building blocks of the spliceosome, and thereby plays an important role in the splicing of cellular pre-mRNAs. Most spliceosomal snRNPs contain a common set of Sm proteins smb1, smd1, smd2, smd3, sme1, smf1 and smg1 that assemble in a heptameric protein ring on the Sm site of the small nuclear RNA to form the core snRNP. In the cytosol, the Sm proteins smd1, smd2, sme1, smf1 and smg1 (5Sm) are trapped in an inactive 6S pICln-Sm complex by the chaperone saf5. To complete assembly of core snRNPs, the SMN complex accepts 5Sm from saf5. Binding of snRNA inside 5Sm ultimately triggers eviction of the SMN complex, thereby allowing binding of smd3 and smb1 to complete assembly of the core snRNP. Within the SMN complex, yip11/gem2 constrains the conformation of 5Sm, thereby promoting 5Sm binding to snRNA containing the snRNP code (a nonameric Sm site and a 3'-adjacent stem-loop), thus preventing progression of assembly until a cognate substrate is bound. The protein is SMN complex subunit yip11/gem2 (yip11) of Schizosaccharomyces pombe (strain 972 / ATCC 24843) (Fission yeast).